We begin with the raw amino-acid sequence, 289 residues long: Ribonuclease H2 subunit A (289 aa).

The RNase H type-2 domain occupies 20 to 249; that stretch reads PFVMGIDEAG…TETAMRGACF (230 aa). A divalent metal cation-binding residues include Asp-26, Glu-27, and Asp-134.

This sequence belongs to the RNase HII family. Eukaryotic subfamily. Requires Mn(2+) as cofactor. Mg(2+) is required as a cofactor.

The enzyme catalyses Endonucleolytic cleavage to 5'-phosphomonoester.. Its function is as follows. Endonuclease that specifically degrades the RNA of RNA-DNA hybrids. Participates in DNA replication. In Dictyostelium discoideum (Social amoeba), this protein is Ribonuclease H2 subunit A (rnaseh2A).